We begin with the raw amino-acid sequence, 737 residues long: Catalase-peroxidase (737 aa).

Residues 1–32 (MSKENMSNEGKCPFNHGAAGTNQSSGRGTSNK) form a disordered region. A compositionally biased stretch (polar residues) spans 20–32 (GTNQSSGRGTSNK). Positions 103 to 226 (WHSAGTYRTA…LAAVQMGLIY (124 aa)) form a cross-link, tryptophyl-tyrosyl-methioninium (Trp-Tyr) (with M-252). His-104 functions as the Proton acceptor in the catalytic mechanism. The segment at residues 226 to 252 (YVNPEGPEGKPDTLASARDIRDTFGRM) is a cross-link (tryptophyl-tyrosyl-methioninium (Tyr-Met) (with W-103)). Residue His-267 coordinates heme b.

This sequence belongs to the peroxidase family. Peroxidase/catalase subfamily. As to quaternary structure, homodimer or homotetramer. Heme b serves as cofactor. In terms of processing, formation of the three residue Trp-Tyr-Met cross-link is important for the catalase, but not the peroxidase activity of the enzyme.

The catalysed reaction is H2O2 + AH2 = A + 2 H2O. It catalyses the reaction 2 H2O2 = O2 + 2 H2O. Bifunctional enzyme with both catalase and broad-spectrum peroxidase activity. In Marinomonas sp. (strain MWYL1), this protein is Catalase-peroxidase.